The chain runs to 332 residues: Biotin synthase (332 aa).

The 231-residue stretch at 53 to 283 (WGKGGIHACS…VHPHSIIKFA (231 aa)) folds into the Radical SAM core domain. C71, C75, and C78 together coordinate [4Fe-4S] cluster. Residues C150, C211, and K281 each coordinate [2Fe-2S] cluster.

It belongs to the radical SAM superfamily. Biotin synthase family. As to quaternary structure, homodimer. Requires [4Fe-4S] cluster as cofactor. [2Fe-2S] cluster serves as cofactor.

The catalysed reaction is (4R,5S)-dethiobiotin + (sulfur carrier)-SH + 2 reduced [2Fe-2S]-[ferredoxin] + 2 S-adenosyl-L-methionine = (sulfur carrier)-H + biotin + 2 5'-deoxyadenosine + 2 L-methionine + 2 oxidized [2Fe-2S]-[ferredoxin]. It functions in the pathway cofactor biosynthesis; biotin biosynthesis; biotin from 7,8-diaminononanoate: step 2/2. Functionally, catalyzes the conversion of dethiobiotin (DTB) to biotin by the insertion of a sulfur atom into dethiobiotin via a radical-based mechanism. The sequence is that of Biotin synthase from Chlorobium phaeovibrioides (strain DSM 265 / 1930) (Prosthecochloris vibrioformis (strain DSM 265)).